Consider the following 252-residue polypeptide: Phosphoglycolate phosphatase (252 aa).

D13 (nucleophile) is an active-site residue. Mg(2+) is bound by residues D13, D15, and D192.

It belongs to the HAD-like hydrolase superfamily. CbbY/CbbZ/Gph/YieH family. In terms of assembly, monomer. The cofactor is Mg(2+). Chloride serves as cofactor.

It catalyses the reaction 2-phosphoglycolate + H2O = glycolate + phosphate. It participates in organic acid metabolism; glycolate biosynthesis; glycolate from 2-phosphoglycolate: step 1/1. Specifically catalyzes the dephosphorylation of 2-phosphoglycolate. Is involved in the dissimilation of the intracellular 2-phosphoglycolate formed during the DNA repair of 3'-phosphoglycolate ends, a major class of DNA lesions induced by oxidative stress. In Shigella sonnei (strain Ss046), this protein is Phosphoglycolate phosphatase.